The sequence spans 252 residues: Flap endonuclease Xni (252 aa).

Aspartate 105 contributes to the Mg(2+) binding site. One can recognise a 5'-3' exonuclease domain in the interval 162-251 (EQYQFLDFIA…EINLKQFRVK (90 aa)). The K(+) site is built by leucine 172, alanine 173, proline 181, isoleucine 183, and isoleucine 186. An interaction with DNA region spans residues 185 to 190 (GIGPKS).

It belongs to the Xni family. The cofactor is Mg(2+). It depends on K(+) as a cofactor.

Its function is as follows. Has flap endonuclease activity. During DNA replication, flap endonucleases cleave the 5'-overhanging flap structure that is generated by displacement synthesis when DNA polymerase encounters the 5'-end of a downstream Okazaki fragment. This is Flap endonuclease Xni from Shewanella denitrificans (strain OS217 / ATCC BAA-1090 / DSM 15013).